The sequence spans 141 residues: MALERTLSIIKPDAVERNLVGKILSRFEENGFQIVAMKMLRLNQAQAEGFYAEHQGKPFFDGLVEYMTSAPVVVSVLEKDNAVKDYRTLIGATDPQQAAEGTIRKDFAESRRRNSVHGSDSEESAVREIAYFFVESEICPR.

ATP is bound by residues Lys-11, Phe-59, Arg-87, Thr-93, Arg-104, and Asn-114. Residue His-117 is the Pros-phosphohistidine intermediate of the active site.

The protein belongs to the NDK family. Homotetramer. It depends on Mg(2+) as a cofactor.

The protein localises to the cytoplasm. It catalyses the reaction a 2'-deoxyribonucleoside 5'-diphosphate + ATP = a 2'-deoxyribonucleoside 5'-triphosphate + ADP. The catalysed reaction is a ribonucleoside 5'-diphosphate + ATP = a ribonucleoside 5'-triphosphate + ADP. Its function is as follows. Major role in the synthesis of nucleoside triphosphates other than ATP. The ATP gamma phosphate is transferred to the NDP beta phosphate via a ping-pong mechanism, using a phosphorylated active-site intermediate. This chain is Nucleoside diphosphate kinase, found in Actinobacillus succinogenes (strain ATCC 55618 / DSM 22257 / CCUG 43843 / 130Z).